The sequence spans 155 residues: Cell division protein SepF (155 aa).

The span at 22-46 shows a compositional bias: basic and acidic residues; it reads RYVEEPEQRDERPALEKGRAPKEKQ. The tract at residues 22 to 54 is disordered; it reads RYVEEPEQRDERPALEKGRAPKEKQTAGMEQNQ.

The protein belongs to the SepF family. Homodimer. Interacts with FtsZ.

It localises to the cytoplasm. Cell division protein that is part of the divisome complex and is recruited early to the Z-ring. Probably stimulates Z-ring formation, perhaps through the cross-linking of FtsZ protofilaments. Its function overlaps with FtsA. The polypeptide is Cell division protein SepF (Shouchella clausii (strain KSM-K16) (Alkalihalobacillus clausii)).